The chain runs to 273 residues: Shikimate dehydrogenase (NADP(+)) (273 aa).

Shikimate-binding positions include 15-17 (SLS) and T62. The active-site Proton acceptor is K66. Residue E78 participates in NADP(+) binding. The shikimate site is built by N87 and D102. NADP(+)-binding positions include 126–130 (GAGGA), 150–155 (NRTIEK), and I217. Y219 is a shikimate binding site. G240 contacts NADP(+).

It belongs to the shikimate dehydrogenase family. Homodimer.

It catalyses the reaction shikimate + NADP(+) = 3-dehydroshikimate + NADPH + H(+). Its pathway is metabolic intermediate biosynthesis; chorismate biosynthesis; chorismate from D-erythrose 4-phosphate and phosphoenolpyruvate: step 4/7. Involved in the biosynthesis of the chorismate, which leads to the biosynthesis of aromatic amino acids. Catalyzes the reversible NADPH linked reduction of 3-dehydroshikimate (DHSA) to yield shikimate (SA). The chain is Shikimate dehydrogenase (NADP(+)) from Nitrosopumilus maritimus (strain SCM1).